The chain runs to 150 residues: MKVVFLEDVKGQGKKGQIKEVPTGYAQNFLIKKNLAKVATAAALSEVKGQAKAKEKEEAELLAEAKALKEVLEKDETVVEIKMKVGQTGHTFGAVDKADIAKALKSQFGLKLDKRKIQLINKIQALGTKDVPVKLHRDVTAMVKVKISEA.

Belongs to the bacterial ribosomal protein bL9 family.

Its function is as follows. Binds to the 23S rRNA. The protein is Large ribosomal subunit protein bL9 of Lactococcus lactis subsp. cremoris (strain SK11).